Consider the following 365-residue polypeptide: METKKTLREGYTTGACATAATKAALTALITGIIQTEATIYLPVGRWATFAIEACEIYGESVKATVIKDGGDDPDATHGAAIVSTVSWAEQPGIHLDGGKGVGRVTKPGLPVPVGEAAINPIPRKMIHETAREVLEQYGISRGVNVIISVPNGEEIAKKTLNARLGIIGGISILGTRGIVIPFSTSAYRASIIQAIQVAKANGCDHVVITTGGRSEKFAMRQYPHLPEEAFIEMGDFVGFTLKQCKRLGIRTVSMVGMMGKFSKVAQGIMMVHSKSAPIDFSFLAAIAEQAGASPELVAAVREANTASQVGEMMQEAGNERFFEILCDHCCLSALREVGGGMTVETSLYTMGGQLLGKAVRNDAGD.

The protein belongs to the CbiD family.

The catalysed reaction is Co-precorrin-5B + S-adenosyl-L-methionine = Co-precorrin-6A + S-adenosyl-L-homocysteine. The protein operates within cofactor biosynthesis; adenosylcobalamin biosynthesis; cob(II)yrinate a,c-diamide from sirohydrochlorin (anaerobic route): step 6/10. Its function is as follows. Catalyzes the methylation of C-1 in cobalt-precorrin-5B to form cobalt-precorrin-6A. The chain is Cobalt-precorrin-5B C(1)-methyltransferase from Geobacillus sp. (strain WCH70).